We begin with the raw amino-acid sequence, 133 residues long: FPRL1 inhibitory protein (133 aa).

The N-terminal stretch at 1–28 (MKKNITKTIIASTVIAAGLLTQTNDAKA) is a signal peptide.

Belongs to the CHIPS/FLIPr family.

It localises to the secreted. May be involved in countering the first line of host defense mechanisms. Impairs the leukocyte response to FPRL1 agonists by binding directly to host FPRL1. The chain is FPRL1 inhibitory protein (flr) from Staphylococcus aureus (strain Mu50 / ATCC 700699).